The chain runs to 338 residues: 3-phosphoshikimate 1-carboxyvinyltransferase 2 (338 aa).

A phosphoenolpyruvate-binding site is contributed by arginine 25. 3-phosphoshikimate contacts are provided by serine 72, serine 73, glutamine 74, serine 100, aspartate 225, and lysine 252. Glutamine 74 serves as a coordination point for phosphoenolpyruvate. Aspartate 225 serves as the catalytic Proton acceptor. Arginine 256, arginine 298, and lysine 323 together coordinate phosphoenolpyruvate.

This sequence belongs to the EPSP synthase family.

Its subcellular location is the plastid. It is found in the chloroplast. It carries out the reaction 3-phosphoshikimate + phosphoenolpyruvate = 5-O-(1-carboxyvinyl)-3-phosphoshikimate + phosphate. Its pathway is metabolic intermediate biosynthesis; chorismate biosynthesis; chorismate from D-erythrose 4-phosphate and phosphoenolpyruvate: step 6/7. Its function is as follows. Catalyzes the transfer of the enolpyruvyl moiety of phosphoenolpyruvate (PEP) to the 5-hydroxyl of shikimate-3-phosphate (S3P) to produce enolpyruvyl shikimate-3-phosphate and inorganic phosphate. In Nicotiana tabacum (Common tobacco), this protein is 3-phosphoshikimate 1-carboxyvinyltransferase 2 (EPSPS-2).